Here is a 182-residue protein sequence, read N- to C-terminus: Dual-action ribosomal maturation protein DarP (182 aa).

Belongs to the DarP family.

Its subcellular location is the cytoplasm. In terms of biological role, member of a network of 50S ribosomal subunit biogenesis factors which assembles along the 30S-50S interface, preventing incorrect 23S rRNA structures from forming. Promotes peptidyl transferase center (PTC) maturation. This is Dual-action ribosomal maturation protein DarP from Serratia proteamaculans (strain 568).